The chain runs to 365 residues: U-box domain-containing protein 56 (365 aa).

The stretch at 176-281 (YEEQRRRLEI…ELLRALEKGE (106 aa)) forms a coiled coil. The region spanning 293 to 365 (EPPQCFICPI…AIKDWLQQHP (73 aa)) is the U-box domain.

The enzyme catalyses S-ubiquitinyl-[E2 ubiquitin-conjugating enzyme]-L-cysteine + [acceptor protein]-L-lysine = [E2 ubiquitin-conjugating enzyme]-L-cysteine + N(6)-ubiquitinyl-[acceptor protein]-L-lysine.. The protein operates within protein modification; protein ubiquitination. Functionally, functions as an E3 ubiquitin ligase. The protein is U-box domain-containing protein 56 (PUB56) of Arabidopsis thaliana (Mouse-ear cress).